The chain runs to 406 residues: Arginine biosynthesis bifunctional protein ArgJ (406 aa).

Substrate contacts are provided by Thr152, Lys179, Thr190, Glu277, Asn401, and Ser406. Thr190 functions as the Nucleophile in the catalytic mechanism.

The protein belongs to the ArgJ family. As to quaternary structure, heterotetramer of two alpha and two beta chains.

Its subcellular location is the cytoplasm. The enzyme catalyses N(2)-acetyl-L-ornithine + L-glutamate = N-acetyl-L-glutamate + L-ornithine. It carries out the reaction L-glutamate + acetyl-CoA = N-acetyl-L-glutamate + CoA + H(+). The protein operates within amino-acid biosynthesis; L-arginine biosynthesis; L-ornithine and N-acetyl-L-glutamate from L-glutamate and N(2)-acetyl-L-ornithine (cyclic): step 1/1. It functions in the pathway amino-acid biosynthesis; L-arginine biosynthesis; N(2)-acetyl-L-ornithine from L-glutamate: step 1/4. In terms of biological role, catalyzes two activities which are involved in the cyclic version of arginine biosynthesis: the synthesis of N-acetylglutamate from glutamate and acetyl-CoA as the acetyl donor, and of ornithine by transacetylation between N(2)-acetylornithine and glutamate. In Neisseria gonorrhoeae, this protein is Arginine biosynthesis bifunctional protein ArgJ.